A 121-amino-acid polypeptide reads, in one-letter code: Alpha-endosulfine (121 aa).

The disordered stretch occupies residues 1 to 53 (MSQKQEEENPAEETGEEKQDTQEKEGILPEKAEEAKLKAKYPSLGQKPGGSDF). Serine 2 carries the post-translational modification N-acetylserine. Serine 2 is subject to Phosphoserine. Residues 16-37 (EEKQDTQEKEGILPEKAEEAKL) are compositionally biased toward basic and acidic residues. Threonine 21 is modified (phosphothreonine). Phosphoserine is present on serine 43. Serine 67 is subject to Phosphoserine; by GWL. Residues 79–121 (NKQLPSAGPDKNLVTGDHIPTPQDLPQRKSSLVTSKLAGGQVE) form a disordered region. A Phosphoserine; by PKA modification is found at serine 109.

This sequence belongs to the endosulfine family. In terms of assembly, interacts (when phosphorylated at Ser-67) with PPP2R2D. Interacts with ABCC8. Interacts with SNCA; interaction is disrupted when phosphorylated at Ser-109. In terms of processing, phosphorylation at Ser-67 by GWL during mitosis is essential for interaction with PPP2R2D (PR55-delta) and subsequent inactivation of PP2A. Phosphorylated by PKA.

Its subcellular location is the cytoplasm. In terms of biological role, protein phosphatase inhibitor that specifically inhibits protein phosphatase 2A (PP2A) during mitosis. When phosphorylated at Ser-67 during mitosis, specifically interacts with PPP2R2D (PR55-delta) and inhibits its activity, leading to inactivation of PP2A, an essential condition to keep cyclin-B1-CDK1 activity high during M phase. Also acts as a stimulator of insulin secretion by interacting with sulfonylurea receptor (ABCC8), thereby preventing sulfonylurea from binding to its receptor and reducing K(ATP) channel currents. The polypeptide is Alpha-endosulfine (ENSA) (Bos taurus (Bovine)).